A 424-amino-acid polypeptide reads, in one-letter code: Ankyrin repeat domain-containing protein 61 (424 aa).

7 ANK repeats span residues 80 to 109, 113 to 169, 172 to 201, 205 to 234, 239 to 278, 282 to 311, and 315 to 348; these read LSFL…DPEA, QGFT…ARVD, HRHC…QVNA, SSMT…SVNC, TGNT…QVNA, DGQA…NVNI, and NGES…PLRL.

The protein is Ankyrin repeat domain-containing protein 61 (ANKRD61) of Bos taurus (Bovine).